Consider the following 104-residue polypeptide: Elicitor peptide 6 (104 aa).

The propeptide occupies 1–81 (MEVNGEEERR…TVEETGFMAR (81 aa)). Over residues 48–61 (SSSIPPSSSSSSPS) the composition is skewed to low complexity. The segment at 48–104 (SSSIPPSSSSSSPSLVEEEDSGTETVEETGFMARITAVLRRRPRPPPYSSGRPGQNN) is disordered. Residues 63-74 (VEEEDSGTETVE) show a composition bias toward acidic residues.

The protein belongs to the brassicaceae elicitor peptide family.

Its function is as follows. Elicitor of plant defense. The polypeptide is Elicitor peptide 6 (PEP6) (Arabidopsis thaliana (Mouse-ear cress)).